Reading from the N-terminus, the 3141-residue chain is Genome polyprotein (3141 aa).

Residues 165–308 (RMSEASLQLF…KKQSNEIIHY (144 aa)) form the Peptidase S30 domain. Residues His-216, Asp-225, and Ser-259 each act as for P1 proteinase activity in the active site. An Involved in interaction with stylet and aphid transmission motif is present at residues 360-363 (KITC). The short motif at 619–621 (PTK) is the Involved in virions binding and aphid transmission element. In terms of domain architecture, Peptidase C6 spans 645–767 (MFIAKAGYCY…DSNMKTYLVG (123 aa)). Catalysis depends on for helper component proteinase activity residues Cys-653 and His-726. The Helicase ATP-binding domain occupies 1241 to 1393 (EVMHGSHQDI…TQKEVKVIVE (153 aa)). 1254–1261 (GAVGSGKS) is an ATP binding site. Positions 1343–1346 (DECH) match the DECH box motif. The 160-residue stretch at 1412 to 1571 (DILKHGVNVL…GLPVMTNGVS (160 aa)) folds into the Helicase C-terminal domain. A Nuclear localization signal motif is present at residues 1898–1905 (KKGKSKGK). O-(5'-phospho-RNA)-tyrosine is present on Tyr-1920. The Peptidase C4 domain occupies 2051–2269 (SKSLFRGLRD…VCWGSLQLKR (219 aa)). Residues His-2096, Asp-2131, and Cys-2201 each act as for nuclear inclusion protein A activity in the active site. A RdRp catalytic domain is found at 2535–2659 (WIYCDADGSQ…AVHPAYESIY (125 aa)). Phosphoserine is present on residues Ser-2836, Ser-2892, Ser-2912, and Ser-2929. Phosphothreonine occurs at positions 3065 and 3124.

It belongs to the potyviridae genome polyprotein family. In terms of assembly, interacts with host eIF4E protein (via cap-binding region); this interaction mediates the translation of the VPg-viral RNA conjugates. Part of a complex that comprises VPg, RNA, host EIF4E and EIF4G; this interaction mediates the translation of the VPg-viral RNA conjugates. Interacts with host eIF(iso)4E both in host nucleus and cytoplasm. In terms of processing, VPg is uridylylated by the polymerase and is covalently attached to the 5'-end of the genomic RNA. This uridylylated form acts as a nucleotide-peptide primer for the polymerase. Potyviral RNA is expressed as two polyproteins which undergo post-translational proteolytic processing. Genome polyprotein is processed by NIa-pro, P1 and HC-pro proteinases resulting in the production of at least ten individual proteins. P3N-PIPO polyprotein is cleaved by P1 and HC-pro proteinases resulting in the production of three individual proteins. The P1 proteinase and the HC-pro cleave only their respective C-termini autocatalytically. 6K1 is essential for proper proteolytic separation of P3 from CI.

It localises to the host cytoplasmic vesicle. The protein localises to the host nucleus. Its subcellular location is the host cytoplasm. The protein resides in the virion. It carries out the reaction RNA(n) + a ribonucleoside 5'-triphosphate = RNA(n+1) + diphosphate. The catalysed reaction is Hydrolyzes glutaminyl bonds, and activity is further restricted by preferences for the amino acids in P6 - P1' that vary with the species of potyvirus, e.g. Glu-Xaa-Xaa-Tyr-Xaa-Gln-|-(Ser or Gly) for the enzyme from tobacco etch virus. The natural substrate is the viral polyprotein, but other proteins and oligopeptides containing the appropriate consensus sequence are also cleaved.. The enzyme catalyses Hydrolyzes a Gly-|-Gly bond at its own C-terminus, commonly in the sequence -Tyr-Xaa-Val-Gly-|-Gly, in the processing of the potyviral polyprotein.. Required for aphid transmission and also has proteolytic activity. Only cleaves a Gly-Gly dipeptide at its own C-terminus. Interacts with virions and aphid stylets. Acts as a suppressor of RNA-mediated gene silencing, also known as post-transcriptional gene silencing (PTGS), a mechanism of plant viral defense that limits the accumulation of viral RNAs. May have RNA-binding activity. Functionally, has helicase activity. It may be involved in replication. In terms of biological role, indispensable for virus replication. Reduces the abundance of host transcripts related to jasmonic acid biosynthesis therefore altering the host defenses. In order to increase its own stability, decreases host protein degradation pathways. Its function is as follows. Indispensable for virus replication. Mediates the cap-independent, EIF4E-dependent translation of viral genomic RNAs. Binds to the cap-binding site of host EIF4E and thus interferes with the host EIF4E-dependent mRNA export and translation. VPg-RNA directly binds EIF4E and is a template for transcription. Also forms trimeric complexes with EIF4E-EIF4G, which are templates for translation. Functionally, has RNA-binding and proteolytic activities. In terms of biological role, an RNA-dependent RNA polymerase that plays an essential role in the virus replication. Its function is as follows. Involved in aphid transmission, cell-to-cell and systemis movement, encapsidation of the viral RNA and in the regulation of viral RNA amplification. This is Genome polyprotein from Plum pox potyvirus (strain D) (PPV).